Here is a 418-residue protein sequence, read N- to C-terminus: Putative ion-transport protein YfeO (418 aa).

12 helical membrane-spanning segments follow: residues 10 to 30, 54 to 74, 99 to 119, 120 to 140, 149 to 169, 186 to 206, 223 to 243, 258 to 278, 300 to 320, 322 to 342, 343 to 363, and 371 to 391; these read LLLSLPAVAIGIASSLILIVV, DSPLWIIGVLTLTGIAVGLVI, ALPGLIVALILGLAGGVSLGP, EHPIMTVNIALAVAIGARLLP, ILASAGTIGALFGTPVAAALI, LFAPLMAAAAGALTTGLFFHP, ILSGAIVAAIAIAAGMVAVWC, VLVLGIGGFILGILGVIGGPV, DYFLLAVIKLAALVVAAASGF, GGRIFPAVFVGVALGLMLHEH, VPAVPAAITVSCAILGIVLVV, and LFMAAVVVPNTTLLPLLCIVM.

This sequence belongs to the chloride channel (TC 2.A.49) family.

The protein resides in the cell membrane. This is Putative ion-transport protein YfeO from Escherichia coli (strain 55989 / EAEC).